The following is a 333-amino-acid chain: DNA-directed RNA polymerase subunit alpha (333 aa).

The tract at residues 1 to 233 is alpha N-terminal domain (alpha-NTD); that stretch reads MVREKVKVST…NLFIPFLHVE (233 aa). The alpha C-terminal domain (alpha-CTD) stretch occupies residues 267 to 333; the sequence is LVFQYIFIDQ…LEKNRKFISN (67 aa).

The protein belongs to the RNA polymerase alpha chain family. In plastids the minimal PEP RNA polymerase catalytic core is composed of four subunits: alpha, beta, beta', and beta''. When a (nuclear-encoded) sigma factor is associated with the core the holoenzyme is formed, which can initiate transcription.

The protein localises to the plastid. It is found in the chloroplast. The catalysed reaction is RNA(n) + a ribonucleoside 5'-triphosphate = RNA(n+1) + diphosphate. DNA-dependent RNA polymerase catalyzes the transcription of DNA into RNA using the four ribonucleoside triphosphates as substrates. This is DNA-directed RNA polymerase subunit alpha from Aethionema grandiflorum (Persian stone-cress).